The sequence spans 326 residues: Vitamin B12 import system permease protein BtuC (326 aa).

Transmembrane regions (helical) follow at residues 15-35 (WLLC…CAGE), 61-81 (LAVL…QALF), 88-108 (PGLL…VLLG), 112-132 (LPNW…TLIL), 146-166 (LLAG…AIYF), 184-204 (GGVD…LLWI), 240-260 (GWMV…GLVI), 274-294 (VLLP…DVVA), and 302-322 (ELPI…WLLL).

This sequence belongs to the binding-protein-dependent transport system permease family. FecCD subfamily. As to quaternary structure, the complex is composed of two ATP-binding proteins (BtuD), two transmembrane proteins (BtuC) and a solute-binding protein (BtuF).

The protein resides in the cell inner membrane. In terms of biological role, part of the ABC transporter complex BtuCDF involved in vitamin B12 import. Involved in the translocation of the substrate across the membrane. This Escherichia coli (strain SE11) protein is Vitamin B12 import system permease protein BtuC.